Reading from the N-terminus, the 178-residue chain is Cell division protein ZapC (178 aa).

This sequence belongs to the ZapC family. In terms of assembly, interacts directly with FtsZ.

The protein resides in the cytoplasm. Functionally, contributes to the efficiency of the cell division process by stabilizing the polymeric form of the cell division protein FtsZ. Acts by promoting interactions between FtsZ protofilaments and suppressing the GTPase activity of FtsZ. This chain is Cell division protein ZapC, found in Pseudoalteromonas atlantica (strain T6c / ATCC BAA-1087).